The sequence spans 510 residues: Cytochrome P450 703A2 (510 aa).

The helical transmembrane segment at 2-22 threads the bilayer; that stretch reads ILVLASLFAVLILNVLLWRWL. Residue C451 participates in heme binding.

This sequence belongs to the cytochrome P450 family. Heme serves as cofactor.

The protein resides in the membrane. It catalyses the reaction dodecanoate + reduced [NADPH--hemoprotein reductase] + O2 = 7-hydroxydodecanoate + oxidized [NADPH--hemoprotein reductase] + H2O + H(+). In terms of biological role, involved in pollen wall development. Catalyzes the conversion of medium-chain saturated fatty acids to the corresponding monohydroxylated fatty acids, with a preferential hydroxylation of lauric acid at the C-7 position. In-chain hydroxylated fatty acids, together with omega-hydroxylated fatty acids, are key monomeric aliphatic building blocks for sporopollenin synthesis during exine formation. The protein is Cytochrome P450 703A2 of Arabidopsis thaliana (Mouse-ear cress).